A 334-amino-acid chain; its full sequence is MSAIDVGVIGASGYTGLELIKILLKHPKFNLSYVANTEGGATLSELHPSLKGAFECNVVKVDIDELAKKCELVFLAVPHQAAMAYVKPLIEKGLKVVDLSADYRLSKDIYEEFYCPHTDVENLLHAVYGLPELFAQKIKKAKLVANPGCFPTSAILGLLPFMDKRVAHTPIIVDSKTGVSGAGKKLSDVTHFVNVNENLFAYNPLLHRHAPEIAQKLGVDFDEVHFVPHLVPVTRGMLSSIYIQVEGDFDAFSILSEFYKDAKHVRVSKNPVDMKSVAGTNFCDIYVKQKNNILFISSAIDNLMRGASSAAVVNANLMMGFDEELGIPNIAYVP.

Cysteine 149 is an active-site residue.

This sequence belongs to the NAGSA dehydrogenase family. Type 1 subfamily.

It is found in the cytoplasm. It catalyses the reaction N-acetyl-L-glutamate 5-semialdehyde + phosphate + NADP(+) = N-acetyl-L-glutamyl 5-phosphate + NADPH + H(+). It participates in amino-acid biosynthesis; L-arginine biosynthesis; N(2)-acetyl-L-ornithine from L-glutamate: step 3/4. In terms of biological role, catalyzes the NADPH-dependent reduction of N-acetyl-5-glutamyl phosphate to yield N-acetyl-L-glutamate 5-semialdehyde. The protein is N-acetyl-gamma-glutamyl-phosphate reductase of Sulfurimonas denitrificans (strain ATCC 33889 / DSM 1251) (Thiomicrospira denitrificans (strain ATCC 33889 / DSM 1251)).